The following is a 694-amino-acid chain: Elongation factor G (694 aa).

Positions E8 to V284 constitute a tr-type G domain. GTP is bound by residues A17–T24, D81–H85, and N135–D138.

This sequence belongs to the TRAFAC class translation factor GTPase superfamily. Classic translation factor GTPase family. EF-G/EF-2 subfamily.

The protein resides in the cytoplasm. Its function is as follows. Catalyzes the GTP-dependent ribosomal translocation step during translation elongation. During this step, the ribosome changes from the pre-translocational (PRE) to the post-translocational (POST) state as the newly formed A-site-bound peptidyl-tRNA and P-site-bound deacylated tRNA move to the P and E sites, respectively. Catalyzes the coordinated movement of the two tRNA molecules, the mRNA and conformational changes in the ribosome. The protein is Elongation factor G of Persephonella marina (strain DSM 14350 / EX-H1).